The sequence spans 338 residues: N-acetyl-gamma-glutamyl-phosphate reductase (338 aa).

The active site involves Cys148.

It belongs to the NAGSA dehydrogenase family. Type 1 subfamily.

Its subcellular location is the cytoplasm. It catalyses the reaction N-acetyl-L-glutamate 5-semialdehyde + phosphate + NADP(+) = N-acetyl-L-glutamyl 5-phosphate + NADPH + H(+). It participates in amino-acid biosynthesis; L-arginine biosynthesis; N(2)-acetyl-L-ornithine from L-glutamate: step 3/4. Catalyzes the NADPH-dependent reduction of N-acetyl-5-glutamyl phosphate to yield N-acetyl-L-glutamate 5-semialdehyde. In Leptospira interrogans serogroup Icterohaemorrhagiae serovar Lai (strain 56601), this protein is N-acetyl-gamma-glutamyl-phosphate reductase.